We begin with the raw amino-acid sequence, 652 residues long: MKKIINIGIVAHVDAGKTTITENLLYYSGAIKSVGRVDLGNTQTDSMELERKRGITIKSSTISFNWNNVKVNIIDTPGHVDFISEVERSLNSLDGAILVISGVEGIQSQTRILFDTLKELNIPTIIFVNKLDRIGANFNKVFEEIKKNMSNKVVRLQEVYDVGSKAVYIKKLFDTCIINDDAINVLSDLDEAFLERYIGGIEPDKEEIQEKLSLYAREGSLYPVFCGAAAIGLGIEDLLDGICSYFPFASNDCESDLSGVVFKIERTSKNEKKVYVRLFGGKISVRDKIQVPNKEIAEKVKKINRLENGGVVEAQRIEAGDIGILYGLTSFQVGDVIGISNDKIKNISIAKPALKTTISAIDKEKNPELFKALTLLAEEDPLLAFAMNDIDKEIYVNLFGEVQMEILSSMLDDLYGIKVEFSNIETIYKETPKGFGASIMHMQEDLNPFWATVGLEIEPAGRGEGLRYISNVSVGSLPKSFQNAIEEAVIKTSKQGLFGWEVTDVKVTLSCGEFFSPASTPADFRNVTPMVFMEALYKAQTVLLEPLHEFELKIPQNALSKAVWDLETMRATFDNPIVIGDEFSIKGLIPVENSKEYKMKIASYTEGRGMFVTKFYGYKEASAEFSKARKKTTYDPLNKKEYLLHKLNAIRD.

The 251-residue stretch at 2-252 (KKIINIGIVA…CSYFPFASND (251 aa)) folds into the tr-type G domain. GTP-binding positions include 11–18 (AHVDAGKT), 75–79 (DTPGH), and 129–132 (NKLD).

It belongs to the TRAFAC class translation factor GTPase superfamily. Classic translation factor GTPase family. TetM/TetO subfamily.

In terms of biological role, abolishes the inhibitory effect of tetracyclin on protein synthesis by a non-covalent modification of the ribosomes. The sequence is that of Tetracycline resistance protein TetP (tetP) from Clostridium perfringens.